Reading from the N-terminus, the 762-residue chain is Protein PHTF1 (762 aa).

A PHTF domain is found at 6-150; sequence RDAISWYQKK…VHCQIVSTQI (145 aa). A run of 3 helical transmembrane segments spans residues 77 to 97, 99 to 119, and 121 to 141; these read GLVR…VTSL, IFVW…LYLM, and PIVS…MGTV. The interval 152–184 is disordered; that stretch reads RPSGNNGNRRRRKLRKTVNGDGTRDNGNNSPDK. Asn179 and Asn224 each carry an N-linked (GlcNAc...) asparagine glycan. Phosphoserine occurs at positions 272, 276, 277, 334, and 336. The segment at 345–415 is disordered; it reads AAFSQGSRSG…NTLHSGTKRD (71 aa). Residues 348–364 show a composition bias toward low complexity; that stretch reads SQGSRSGMSGGSRSLNL. Residue Asn363 is glycosylated (N-linked (GlcNAc...) asparagine). Residues 365–376 show a composition bias toward basic and acidic residues; the sequence is SRRDSESTRHDS. Asn431 carries an N-linked (GlcNAc...) asparagine glycan. A run of 4 helical transmembrane segments spans residues 473–493, 515–535, 611–631, and 645–665; these read GVGY…FPFL, TLFC…INFF, VVVS…CAQV, and WEFL…ASLG. N-linked (GlcNAc...) asparagine glycosylation is found at Asn674 and Asn733. The chain crosses the membrane as a helical span at residues 737–757; the sequence is VVILSAVSGVISDLLGFNIRL.

As to quaternary structure, interacts with FEM1B. In terms of tissue distribution, highly expressed in testis.

The protein localises to the endoplasmic reticulum membrane. The protein resides in the golgi apparatus. Its subcellular location is the cis-Golgi network membrane. In Rattus norvegicus (Rat), this protein is Protein PHTF1.